Reading from the N-terminus, the 316-residue chain is Aspartate carbamoyltransferase catalytic subunit (316 aa).

The carbamoyl phosphate site is built by Arg-66 and Thr-67. Lys-94 provides a ligand contact to L-aspartate. The carbamoyl phosphate site is built by Arg-116, His-146, and Gln-149. Residues Arg-179 and Arg-234 each coordinate L-aspartate. Gly-275 and Pro-276 together coordinate carbamoyl phosphate.

It belongs to the aspartate/ornithine carbamoyltransferase superfamily. ATCase family. Heterododecamer (2C3:3R2) of six catalytic PyrB chains organized as two trimers (C3), and six regulatory PyrI chains organized as three dimers (R2).

The catalysed reaction is carbamoyl phosphate + L-aspartate = N-carbamoyl-L-aspartate + phosphate + H(+). It functions in the pathway pyrimidine metabolism; UMP biosynthesis via de novo pathway; (S)-dihydroorotate from bicarbonate: step 2/3. Its function is as follows. Catalyzes the condensation of carbamoyl phosphate and aspartate to form carbamoyl aspartate and inorganic phosphate, the committed step in the de novo pyrimidine nucleotide biosynthesis pathway. In Nitrosomonas europaea (strain ATCC 19718 / CIP 103999 / KCTC 2705 / NBRC 14298), this protein is Aspartate carbamoyltransferase catalytic subunit.